A 647-amino-acid chain; its full sequence is MAAGLATWLPFARAAAVGWLPLAQQPLPPAPGVKASRGDEVLVVNVSGRRFETWKNTLDRYPDTLLGSSEKEFFYDADSGEYFFDRDPDMFRHVLNFYRTGRLHCPRQECIQAFDEELAFYGLVPELVGDCCLEEYRDRKKENAERLAEDEEAEQAGDGPALPAGSSLRQRLWRAFENPHTSTAALVFYYVTGFFIAVSVIANVVETIPCRGSARRSSREQPCGERFPQAFFCMDTACVLIFTGEYLLRLFAAPSRCRFLRSVMSLIDVVAILPYYIGLLVPKNDDVSGAFVTLRVFRVFRIFKFSRHSQGLRILGYTLKSCASELGFLLFSLTMAIIIFATVMFYAEKGTNKTNFTSIPAAFWYTIVTMTTLGYGDMVPSTIAGKIFGSICSLSGVLVIALPVPVIVSNFSRIYHQNQRADKRRAQQKVRLARIRLAKSGTTNAFLQYKQNGGLEDSGSGEEQALCVRNRSAFEQQHHHLLHCLEKTTCHEFTDELTFSEALGAVSPGGRTSRSTSVSSQPVGPGSLLSSCCPRRAKRRAIRLANSTASVSRGSMQELDMLAGLRRSHAPQSRSSLNAKPHDSLDLNCDSRDFVAAIISIPTPPANTPDESQPSSPGGGGRAGSTLRNSSLGTPCLFPETVKISSL.

Residues 1-183 (MAAGLATWLP…RAFENPHTST (183 aa)) lie on the Cytoplasmic side of the membrane. Residues 2-20 (AAGLATWLPFARAAAVGWL) form an interaction with KCNIP1, KCNIP2, and other family members region. 3 residues coordinate Zn(2+): His-104, Cys-131, and Cys-132. Residues 144–163 (AERLAEDEEAEQAGDGPALP) form a disordered region. A helical membrane pass occupies residues 184-205 (AALVFYYVTGFFIAVSVIANVV). Residues 206-230 (ETIPCRGSARRSSREQPCGERFPQA) are Extracellular-facing. Residues 231-252 (FFCMDTACVLIFTGEYLLRLFA) traverse the membrane as a helical segment. Residues 253–263 (APSRCRFLRSV) are Cytoplasmic-facing. The chain crosses the membrane as a helical span at residues 264-284 (MSLIDVVAILPYYIGLLVPKN). At 285 to 287 (DDV) the chain is on the extracellular side. A helical; Voltage-sensor membrane pass occupies residues 288 to 308 (SGAFVTLRVFRVFRIFKFSRH). Over 309–323 (SQGLRILGYTLKSCA) the chain is Cytoplasmic. The segment at 310-323 (QGLRILGYTLKSCA) is S4-S5 linker. Residues 324–345 (SELGFLLFSLTMAIIIFATVMF) traverse the membrane as a helical segment. The Extracellular segment spans residues 346 to 359 (YAEKGTNKTNFTSI). N-linked (GlcNAc...) asparagine glycosylation is found at Asn-352 and Asn-355. Positions 360–371 (PAAFWYTIVTMT) form an intramembrane region, helical. Residues 372 to 377 (TLGYGD) carry the Selectivity filter motif. An intramembrane segment occupies 372 to 379 (TLGYGDMV). The Extracellular portion of the chain corresponds to 380–386 (PSTIAGK). A helical transmembrane segment spans residues 387–415 (IFGSICSLSGVLVIALPVPVIVSNFSRIY). Over 416–647 (HQNQRADKRR…FPETVKISSL (232 aa)) the chain is Cytoplasmic. At Ser-458 the chain carries Phosphoserine. The segment at 474–489 (FEQQHHHLLHCLEKTT) is required for dendritic targeting. Over residues 506-524 (VSPGGRTSRSTSVSSQPVG) the composition is skewed to low complexity. Residues 506-531 (VSPGGRTSRSTSVSSQPVGPGSLLSS) are disordered. The residue at position 555 (Ser-555) is a Phosphoserine. Positions 601-634 (IPTPPANTPDESQPSSPGGGGRAGSTLRNSSLGT) are disordered.

The protein belongs to the potassium channel family. D (Shal) (TC 1.A.1.2) subfamily. Kv4.1/KCND1 sub-subfamily. Component of heteromultimeric potassium channels. Identified in potassium channel complexes containing KCND1, KCND2, KCND3, KCNIP1, KCNIP2, KCNIP3, KCNIP4, DPP6 and DPP10. Widely expressed. Highly expressed in brain, in particular in cerebellum and thalamus; detected at lower levels in the other parts of the brain.

Its subcellular location is the cell membrane. The enzyme catalyses K(+)(in) = K(+)(out). A-type voltage-gated potassium channel that mediates transmembrane potassium transport in excitable membranes in the brain. Mediates A-type current I(SA) in suprachiasmatic nucleus (SCN) neurons. Exhibits a low-threshold A-type current with a hyperpolarized steady-state inactivation midpoint and the recovery process was steeply voltage-dependent, with recovery being markedly faster at more negative potentials. May regulates repetitive firing rates in the suprachiasmatic nucleus (SCN) neurons and circadian rhythms in neuronal excitability and behavior. Contributes to the regulation of the circadian rhythm of action potential firing in suprachiasmatic nucleus neurons, which regulates the circadian rhythm of locomotor activity. The regulatory subunit KCNIP1 modulates the kinetics of channel inactivation, increases the current amplitudes and accelerates recovery from inactivation, shifts activation in a depolarizing direction. The regulatory subunit DPP10 decreases the voltage sensitivity of the inactivation channel gating. The polypeptide is A-type voltage-gated potassium channel KCND1 (Homo sapiens (Human)).